The primary structure comprises 366 residues: Galactoside alpha-(1,2)-fucosyltransferase 1 (366 aa).

The Cytoplasmic segment spans residues 1-8; the sequence is MWPRSHRH. A helical; Signal-anchor for type II membrane protein membrane pass occupies residues 9-25; the sequence is LCLAFLLVCVLSAISFL. Topologically, residues 26 to 366 are lumenal; it reads IHFHQDSIRH…LSPLWPLAEP (341 aa). N-linked (GlcNAc...) asparagine glycans are attached at residues asparagine 66, asparagine 302, and asparagine 328.

It belongs to the glycosyltransferase 11 family.

It is found in the golgi apparatus. Its subcellular location is the golgi stack membrane. It catalyses the reaction a beta-D-galactosyl-(1-&gt;4)-N-acetyl-beta-D-glucosaminyl derivative + GDP-beta-L-fucose = an alpha-L-Fuc-(1-&gt;2)-beta-D-Gal-(1-&gt;4)-beta-D-GlcNAc derivative + GDP + H(+). The enzyme catalyses a ganglioside GA1 + GDP-beta-L-fucose = a ganglioside Fuc-GA1 + GDP + H(+). It carries out the reaction a beta-D-Gal-(1-&gt;3)-beta-D-GlcNAc-(1-&gt;3)-beta-D-Gal-(1-&gt;4)-beta-D-Glc-(1&lt;-&gt;1')-Cer(d18:1(4E)) + GDP-beta-L-fucose = alpha-L-fucosyl-(1-&gt;2)- beta-D-galactosyl-(1-&gt;3)-N-acetyl-beta-D-glucosaminyl-(1-&gt;3)-beta-D-galactosyl-(1-&gt;4)-beta-D-glucosyl-(1&lt;-&gt;1')-N-acylsphing-4-enine + GDP + H(+). The catalysed reaction is a neolactoside nLc4Cer(d18:1(4E)) + GDP-beta-L-fucose = a neolactoside IV(2)-alpha-Fuc-nLc4Cer(d18:1(4E)) + GDP + H(+). It catalyses the reaction a ganglioside GM1 + GDP-beta-L-fucose = a ganglioside Fuc-GM1 + GDP + H(+). The enzyme catalyses beta-D-galactosyl-(1-&gt;3)-N-acetyl-D-galactosamine + GDP-beta-L-fucose = alpha-L-fucosyl-(1-&gt;2)-beta-D-galactosyl-(1-&gt;3)-N-acetyl-D-galactosamine + GDP + H(+). It functions in the pathway protein modification; protein glycosylation. Its function is as follows. Catalyzes the transfer of L-fucose, from a guanosine diphosphate-beta-L-fucose, to the terminal galactose residue of glycoconjugates through an alpha(1,2) linkage leading to H antigen synthesis that is an intermediate substrate in the synthesis of ABO blood group antigens. H antigen is essential for maturation of the glomerular layer of the main olfactory bulb, in cell migration and early cell-cell contacts during tumor associated angiogenesis. Preferentially fucosylates soluble lactose and to a lesser extent fucosylates glycolipids gangliosides GA1 and GM1a. This chain is Galactoside alpha-(1,2)-fucosyltransferase 1, found in Saimiri sciureus (Common squirrel monkey).